Reading from the N-terminus, the 528-residue chain is Ivanolysin (528 aa).

The N-terminal stretch at 1–23 (MKKIMLLLMTLLLVSLPLAQEAQ) is a signal peptide. Transmembrane regions (beta stranded) follow at residues 213 to 226 (ESQL…AFKA), 233 to 242 (VNFGAISEGK), 311 to 320 (STRVKAAFDT), and 328 to 340 (KGDT…IQNA). Positions 482–492 (ECTGLAWEWWR) match the Conserved undecapeptide motif. The short motif at 514–515 (TL) is the Cholesterol binding element.

This sequence belongs to the cholesterol-dependent cytolysin family. In terms of assembly, homooligomeric pore complex of 35 to 50 subunits; when inserted in the host membrane.

Its subcellular location is the secreted. The protein localises to the host membrane. Its function is as follows. A cholesterol-dependent toxin that causes cytolysis by forming pores in cholesterol containing host membranes. After binding to target membranes, the protein undergoes a major conformation change, leading to its insertion in the host membrane and formation of an oligomeric pore complex. Cholesterol is required for binding to host membranes, membrane insertion and pore formation; cholesterol binding is mediated by a Thr-Leu pair in the C-terminus. Can be reversibly inactivated by oxidation. The chain is Ivanolysin (ilo) from Listeria ivanovii.